The primary structure comprises 1414 residues: Phenyloxazoline synthase MbtB (1414 aa).

A Carrier 1 domain is found at 5–78; that stretch reads TACSEIIRAE…AWSQLVSAGT (74 aa). The residue at position 39 (S39) is an O-(pantetheine 4'-phosphoryl)serine. The segment at 96 to 394 is condensation/cyclization; the sequence is EGEPFPVAPM…SSLLLDVDLT (299 aa). The segment at 579–975 is adenylation; sequence SYAQLRDQAS…RLPGVHAAAA (397 aa). Residues 1057–1135 form the Carrier 2 domain; it reads APRTVLQRAL…ALAQLLTGRE (79 aa). S1094 is modified (O-(pantetheine 4'-phosphoryl)serine). A thioesterase region spans residues 1188 to 1413; the sequence is GAVLVFPHAG…AVARMVSADV (226 aa).

This sequence belongs to the ATP-dependent AMP-binding enzyme family. MbtB subfamily. Pantetheine 4'-phosphate is required as a cofactor. 4'-phosphopantetheine is transferred from CoA to a specific serine in each of the two carrier protein domains, leading to their activation from apo to holo forms.

Its pathway is siderophore biosynthesis; mycobactin biosynthesis. Its function is as follows. Involved in the initial steps of the mycobactin biosynthetic pathway. Putatively couples activated salicylic acid with serine or threonine and cyclizes this precursor to the hydroxyphenyloxazoline ring system present in this class of siderophores. Essential for growth in macrophages. This Mycobacterium tuberculosis (strain CDC 1551 / Oshkosh) protein is Phenyloxazoline synthase MbtB (mbtB).